A 367-amino-acid polypeptide reads, in one-letter code: Teichoic acid glycerol-phosphate primase (367 aa).

Belongs to the CDP-glycerol glycerophosphotransferase family.

The protein localises to the cell membrane. The catalysed reaction is N-acetyl-beta-D-mannosaminyl-(1-&gt;4)-N-acetyl-alpha-D-glucosaminyl di-trans,octa-cis-undecaprenyl diphosphate + CDP-glycerol = 4-O-[(2R)-glycerylphospho]-N-acetyl-beta-D-mannosaminyl-(1-&gt;4)-N-acetyl-alpha-D-glucosaminyl di-trans,octa-cis-undecaprenyl diphosphate + CMP + H(+). The protein operates within cell wall biogenesis; poly(ribitol phosphate) teichoic acid biosynthesis. Functionally, catalyzes the addition of a single glycerol phosphate residue to the prenoldiphosphate-linked disaccharide. The chain is Teichoic acid glycerol-phosphate primase (tarB) from Staphylococcus aureus (strain NCTC 8325 / PS 47).